The primary structure comprises 120 residues: Succinate dehydrogenase membrane anchor subunit (120 aa).

At 1–17 (MTEKLLHFIRTKSGSMH) the chain is on the mitochondrial matrix side. A helical membrane pass occupies residues 18-38 (WWLQRFLAILLAPIILYLLFD). At 39 to 63 (VAIYIGQQSDPTVMMFLNRIFNHNS) the chain is on the mitochondrial intermembrane side. Residues 64-85 (IFIFITSVILIWHVRGGMEVII) form a helical membrane-spanning segment. Histidine 76 contacts heme. Residues 86 to 95 (EDYVHGEKTR) lie on the Mitochondrial matrix side of the membrane. Tyrosine 88 lines the a ubiquinone pocket. Residues 96-120 (IVSIFLIRVIAIEIMEYLYKCSIIF) form a helical membrane-spanning segment.

As to quaternary structure, part of an enzyme complex containing four subunits: a flavoprotein, an iron-sulfur protein, plus two membrane-anchoring proteins. Heme serves as cofactor.

It localises to the mitochondrion inner membrane. Its pathway is carbohydrate metabolism; tricarboxylic acid cycle. Membrane-anchoring subunit of succinate dehydrogenase (SDH). The protein is Succinate dehydrogenase membrane anchor subunit (SDH4) of Reclinomonas americana.